A 266-amino-acid chain; its full sequence is MATKILALLALLALFVSATNAFIIPQCSLAPSAIIPQFLPPVTSMGFEHLAVQAYRLQQALAASVLQQPINQLQQQSLAHLTIQTIATQQQQQFLPALSQLDVVNPVAYLQQQLLASNPLALANVAAYQQQQQLQQFLPALSQLAMVNPAAYLQQQQLLSSSPLAVGNAPTYLQQQLLQQIVPALTQLAVANPAAYLQQLLPFNQLTVSNSAAYLQQRQQLLNPLEVPNPLVAAFLQQQQLLPYSQFSLMNPALSWQQPIVGGAIF.

The N-terminal stretch at M1 to A21 is a signal peptide.

Belongs to the zein family.

Functionally, zeins are major seed storage proteins. The sequence is that of 22 kDa alpha-zein 8 from Zea mays (Maize).